We begin with the raw amino-acid sequence, 338 residues long: Stage V sporulation protein AD (338 aa).

In Bacillus subtilis (strain 168), this protein is Stage V sporulation protein AD (spoVAD).